The sequence spans 469 residues: MDSAVTAVLAGKYPAKQHARRVAEALKASGHDGSGVIYLEGTKTRMAEDSDEAVPFRQRRNFYYLSGCELADSYVTYNIDQDELVLYIPAADPDEVMWTGLPLSPEEALKKYDVDKVLASSEINAHLAHYCTNKETAPKRVYAIPDRVCAETTFLPFDDTNWDALSNALNQCRKVKDDYEIALLKRSNEISALAHLAVMKAAKLAKNERELEAVFRSTCLSHGSRGQSYGPIVAAGVNGATLHYQTNDMDLEDPVTGERPSLLVDAGGEYRLYCSDITRAYPLSGKFSVEARQIYDIVLDMQTQCMDMIKPGVAWDDIHARAHKVAISGLLRLGILRGSEEELFEKRISVAFFPHGLGHYMGMDTHDVGGNPNHADPNPMFRYLRLRGTLSPSEVVTVEPGVYFCRFIIEPYLSSPELGKYIDSAVLDKYWKVGGVRIEDNLVITQDGYLNLTTAPKDPEEVERIVQQG.

Residues D265, D276, E399, and E439 each coordinate Mn(2+).

It belongs to the peptidase M24B family. Mn(2+) serves as cofactor.

The enzyme catalyses Release of any N-terminal amino acid, including proline, that is linked to proline, even from a dipeptide or tripeptide.. Catalyzes the removal of a penultimate prolyl residue from the N-termini of peptides. The protein is Probable Xaa-Pro aminopeptidase PEPP (PEPP) of Coccidioides posadasii (strain C735) (Valley fever fungus).